A 190-amino-acid polypeptide reads, in one-letter code: GTP cyclohydrolase 1 (190 aa).

Zn(2+) contacts are provided by Cys-80, His-83, and Cys-151.

It belongs to the GTP cyclohydrolase I family. As to quaternary structure, toroid-shaped homodecamer, composed of two pentamers of five dimers.

It carries out the reaction GTP + H2O = 7,8-dihydroneopterin 3'-triphosphate + formate + H(+). Its pathway is cofactor biosynthesis; 7,8-dihydroneopterin triphosphate biosynthesis; 7,8-dihydroneopterin triphosphate from GTP: step 1/1. The protein is GTP cyclohydrolase 1 (folE) of Rickettsia prowazekii (strain Madrid E).